A 448-amino-acid polypeptide reads, in one-letter code: Probable 3-ketoacyl-CoA thiolase (448 aa).

Residue Cys110 is the Acyl-thioester intermediate of the active site. Residues His402 and Cys432 each act as proton acceptor in the active site.

The protein belongs to the thiolase-like superfamily. Thiolase family.

Its subcellular location is the mitochondrion. The catalysed reaction is an acyl-CoA + acetyl-CoA = a 3-oxoacyl-CoA + CoA. It participates in lipid metabolism; fatty acid beta-oxidation. Functionally, mitochondrial enzyme that catalyzes reactions of the mitochondrial beta-oxidation pathway. The polypeptide is Probable 3-ketoacyl-CoA thiolase (Caenorhabditis elegans).